Reading from the N-terminus, the 406-residue chain is Interactor protein for cytohesin exchange factors 1 (406 aa).

In terms of domain architecture, PH spans 13-112 (HADCQGWLYK…WLNKLGFAVT (100 aa)). Disordered stretches follow at residues 120–173 (DEEC…FSSL), 253–285 (SLNNNKDHLTVPDRAAGSRMADREEIKSSEDDE), and 383–406 (PQDPEVTPQEVMNPTSSDCVENSL). The span at 123-134 (CYSESEQEDPEV) shows a compositional bias: acidic residues. A compositionally biased stretch (low complexity) spans 144–153 (ASTTSSPVAA). Phosphoserine is present on Arg-164. Residues 272–285 (MADREEIKSSEDDE) are compositionally biased toward basic and acidic residues. The span at 392–406 (EVMNPTSSDCVENSL) shows a compositional bias: polar residues.

Interacts with guanine-nucleotide exchange factors PSCD1, PSCD2, PSCD3 and PSCD4.

It localises to the cytoplasm. Its subcellular location is the cell membrane. Its function is as follows. Enhances the promotion of guanine-nucleotide exchange by PSCD2 on ARF6 in a concentration-dependent manner. This is Interactor protein for cytohesin exchange factors 1 (Ipcef1) from Mus musculus (Mouse).